The sequence spans 372 residues: 18-hydroxynorfluorocurarine reductase (372 aa).

The Zn(2+) site is built by Cys-47, Asp-50, His-69, Glu-70, Cys-100, Cys-103, Cys-106, Cys-114, and Cys-172. NADP(+)-binding positions include 197 to 202, Lys-226, 283 to 285, Ser-307, and Arg-354; these read GLGGIG and LGA.

It belongs to the zinc-containing alcohol dehydrogenase family. In terms of assembly, homodimer. It depends on Zn(2+) as a cofactor.

It catalyses the reaction (19E)-cur-19-en-17-al + NADP(+) = norfluorocurarine + NADPH + H(+). The catalysed reaction is 17,18-epoxy-17-hydroxycur-19-ene + NADP(+) = 18-hydroxynorfluorocurarine + NADPH + H(+). Its pathway is alkaloid biosynthesis. Its function is as follows. Alcohol dehydrogenase involved in the biosynthesis of curare monoterpene indole alkaloids (MIAs), natural products such as diaboline, a pharmacologically active compound used to regulate blood pressure. Curare alkaloids act as animal glycine receptor antagonists. Catalyzes the conversion of norfluorocurarine to desoxy Wieland-Gumlich aldehyde, and of 18-OH norfluorocurarine to Wieland-Gumlich aldehyde. This chain is 18-hydroxynorfluorocurarine reductase, found in Strychnos sp.